Here is a 297-residue protein sequence, read N- to C-terminus: Cell division protein ZipA (297 aa).

Position 1 (Met-1) is a topological domain, periplasmic. A helical transmembrane segment spans residues Glu-2 to Phe-22. The Cytoplasmic portion of the chain corresponds to Asp-23 to Arg-297. The tract at residues Asp-48 to Glu-151 is disordered. Residues Ala-83–Pro-92 are compositionally biased toward basic and acidic residues. Residues Leu-124 to Ala-133 are compositionally biased toward acidic residues.

This sequence belongs to the ZipA family. As to quaternary structure, interacts with FtsZ via their C-terminal domains.

It localises to the cell inner membrane. Essential cell division protein that stabilizes the FtsZ protofilaments by cross-linking them and that serves as a cytoplasmic membrane anchor for the Z ring. Also required for the recruitment to the septal ring of downstream cell division proteins. This chain is Cell division protein ZipA, found in Pseudomonas putida (strain ATCC 47054 / DSM 6125 / CFBP 8728 / NCIMB 11950 / KT2440).